The chain runs to 192 residues: Large ribosomal subunit protein uL5 (192 aa).

Belongs to the universal ribosomal protein uL5 family. In terms of assembly, part of the 50S ribosomal subunit; part of the 5S rRNA/L5/L18/L25 subcomplex. Contacts the 5S rRNA and the P site tRNA. Forms a bridge to the 30S subunit in the 70S ribosome.

Its function is as follows. This is one of the proteins that bind and probably mediate the attachment of the 5S RNA into the large ribosomal subunit, where it forms part of the central protuberance. In the 70S ribosome it contacts protein S13 of the 30S subunit (bridge B1b), connecting the 2 subunits; this bridge is implicated in subunit movement. Contacts the P site tRNA; the 5S rRNA and some of its associated proteins might help stabilize positioning of ribosome-bound tRNAs. This is Large ribosomal subunit protein uL5 from Mesorhizobium japonicum (strain LMG 29417 / CECT 9101 / MAFF 303099) (Mesorhizobium loti (strain MAFF 303099)).